The primary structure comprises 652 residues: Phosphomethylpyrimidine synthase (652 aa).

Disordered stretches follow at residues 1–45 (MVSR…SVSA) and 118–166 (QRGD…LDGR). Low complexity predominate over residues 8–45 (SSSSTSKAVTSSPSTSSLSSAASSPSVSSSSSSSSVSA). Positions 134-162 (GASGPGTLGSGTPGSGTPGSGPLGLGGTD) are enriched in gly residues. Substrate is bound by residues Asn-245, Met-274, Tyr-303, His-339, 359–361 (SRG), 400–403 (DGLR), and Glu-439. A Zn(2+)-binding site is contributed by His-443. Tyr-466 is a binding site for substrate. His-507 serves as a coordination point for Zn(2+). 3 residues coordinate [4Fe-4S] cluster: Cys-587, Cys-590, and Cys-595.

Belongs to the ThiC family. [4Fe-4S] cluster serves as cofactor.

It carries out the reaction 5-amino-1-(5-phospho-beta-D-ribosyl)imidazole + S-adenosyl-L-methionine = 4-amino-2-methyl-5-(phosphooxymethyl)pyrimidine + CO + 5'-deoxyadenosine + formate + L-methionine + 3 H(+). It functions in the pathway cofactor biosynthesis; thiamine diphosphate biosynthesis. In terms of biological role, catalyzes the synthesis of the hydroxymethylpyrimidine phosphate (HMP-P) moiety of thiamine from aminoimidazole ribotide (AIR) in a radical S-adenosyl-L-methionine (SAM)-dependent reaction. The polypeptide is Phosphomethylpyrimidine synthase (Frankia casuarinae (strain DSM 45818 / CECT 9043 / HFP020203 / CcI3)).